The following is a 188-amino-acid chain: Peroxiredoxin y4vD (188 aa).

A Thioredoxin domain is found at 2–152; that stretch reads PVKKRVPFVA…VEQWFEEEGF (151 aa). The active-site Cysteine sulfenic acid (-SOH) intermediate (for peroxiredoxin activity) is the Cys-56.

Belongs to the peroxiredoxin family. Prx5 subfamily. In terms of assembly, monomer.

The enzyme catalyses a hydroperoxide + 2 glutathione = an alcohol + glutathione disulfide + H2O. Functionally, thiol-specific peroxidase that catalyzes the reduction of hydrogen peroxide and organic hydroperoxides to water and alcohols, respectively. Plays a role in cell protection against oxidative stress by detoxifying peroxides. This is Peroxiredoxin y4vD from Sinorhizobium fredii (strain NBRC 101917 / NGR234).